Consider the following 1196-residue polypeptide: Sorbin and SH3 domain-containing protein 2 (1196 aa).

Disordered regions lie at residues 25 to 57 (VQSS…ETLN) and 75 to 95 (PNLQ…GNSG). Ser27, Ser28, and Ser40 each carry phosphoserine. Positions 83 to 92 (PTQSHITING) are enriched in polar residues. A phosphoserine mark is found at Ser130 and Ser143. Alanine amide is present on Met148. The 62-residue stretch at 166–227 (VIKAPHYPGI…YNTPYTYNAG (62 aa)) folds into the SoHo domain. The segment covering 235 to 247 (AQSHPAAKTQTYR) has biased composition (polar residues). 2 disordered regions span residues 235–314 (AQSH…EPGK) and 329–407 (SSID…GDDS). 2 stretches are compositionally biased toward basic and acidic residues: residues 252–262 (SHSDNGTDAFK) and 276–312 (RPRD…EYEP). A Phosphoserine modification is found at Ser254. A compositionally biased stretch (polar residues) spans 329 to 343 (SSIDRSLERPSSSAS). Ser334, Ser340, Ser343, and Ser354 each carry phosphoserine. Thr372 is modified (phosphothreonine). Phosphoserine is present on Ser382. Positions 382 to 399 (SSSTFTTSFISSSPSSPS) are enriched in low complexity. Thr387 is subject to Phosphothreonine. A phosphoserine mark is found at Ser392, Ser393, Ser394, Ser396, Ser397, Ser399, Ser478, Ser589, Ser592, Ser645, Ser648, Ser844, and Ser938. The interval 929-958 (QDHESPRSYSSTLTDLGRSVSRERRGTPEK) is disordered. Residues 948–958 (VSRERRGTPEK) show a composition bias toward basic and acidic residues. SH3 domains follow at residues 959–1018 (EVKL…KLTP) and 1034–1095 (GEIG…VVKR). 2 positions are modified to phosphoserine: Ser1113 and Ser1119. The 60-residue stretch at 1137-1196 (GGGEPFQALYNYTPRNEDELELRESDVVDVMEKCDDGWFVGTSRRTKFFGTFPGNYVKRL) folds into the SH3 3 domain.

As to quaternary structure, interacts with ABL1/c-Abl, ABL2/v-Abl/Arg, ACTN, CBL and PALLD. Interacts with ABL, CBL, DNM1, DNM2, FLOT1, AFDN, PTK2B/PYK2, SAPAP, SPTAN1, SYNJ1, SYNJ2, VCL/vinculin and WASF. Interacts with PTPN12 and WASF1 via its SH3 domains; this interaction may mediate the partial PTPN12 and WASF1 translocation to focal adhesion sites. Post-translationally, ubiquitinated by CBL. Expressed in brain; found in synapses in cerebellum.

Its subcellular location is the cytoplasm. The protein localises to the perinuclear region. It localises to the apical cell membrane. It is found in the cell junction. The protein resides in the focal adhesion. Its subcellular location is the cell projection. The protein localises to the lamellipodium. Adapter protein that plays a role in the assembling of signaling complexes, being a link between ABL kinases and actin cytoskeleton. Can form complex with ABL1 and CBL, thus promoting ubiquitination and degradation of ABL1. May play a role in the regulation of pancreatic cell adhesion, possibly by acting on WASF1 phosphorylation, enhancing phosphorylation by ABL1, as well as dephosphorylation by PTPN12. Isoform 2 increases water and sodium absorption in the intestine and gall-bladder. This chain is Sorbin and SH3 domain-containing protein 2 (Sorbs2), found in Rattus norvegicus (Rat).